Consider the following 321-residue polypeptide: Cytochrome f (321 aa).

The N-terminal stretch at 1-38 (MKKNFYTISKTMSRSLKLILFSVFIGFSIFLIPQPTWA) is a signal peptide. Heme is bound by residues Tyr39, Cys59, Cys62, and His63. Residues 288 to 308 (VIGMIIFFIGVGLSQIMLVLK) traverse the membrane as a helical segment.

This sequence belongs to the cytochrome f family. The 4 large subunits of the cytochrome b6-f complex are cytochrome b6, subunit IV (17 kDa polypeptide, PetD), cytochrome f and the Rieske protein, while the 4 small subunits are PetG, PetL, PetM and PetN. The complex functions as a dimer. Heme serves as cofactor.

The protein resides in the cellular thylakoid membrane. Component of the cytochrome b6-f complex, which mediates electron transfer between photosystem II (PSII) and photosystem I (PSI), cyclic electron flow around PSI, and state transitions. This Prochlorococcus marinus (strain NATL1A) protein is Cytochrome f.